The following is a 299-amino-acid chain: MHVVILGSAAGGGVPQWNCRCSICSLAWAGDPRVKARTQSSIAVSPDGERWLLLNASPDIRQQIQANPQMHPREGLRHSPIHAVLLTNGDVDHVAGLLTLREGQPFTLYATPGILASVSDNRVFDVMAADVVKRQTIALDETFEPVPGLSVTLFSVPGKVPLWLEDASMEIGAETETTVGTMIEAGGKRLAYIPGCARVTEDLKARVAGVDALLFDGTVLEDDDMIRAGVGTKTGWRMGHIQINGETGSIASFADVALGRRVLIHINNTNPILIEDSPERAGVEARGWTVAHDGLTLDL.

The protein belongs to the PqqB family.

It participates in cofactor biosynthesis; pyrroloquinoline quinone biosynthesis. May be involved in the transport of PQQ or its precursor to the periplasm. The protein is Coenzyme PQQ synthesis protein B of Methylorubrum populi (strain ATCC BAA-705 / NCIMB 13946 / BJ001) (Methylobacterium populi).